The following is a 577-amino-acid chain: MLAAQKQRITELFQAAVAPLVAGTELNPTVTLERPRDPSHGDVACNLAMQIAKPLKKNPREVAQVLVAALLDNPANRDLIESAEIAGPGFINLRLTPASRQSVVKTVLQQGAQYGKSNLGAGKKVIIEFVSANPTGPLHVGHGRQGALGDAMSSLFDAQGYAVTREFYYNDAGVQIATLATSVQARARGLKPGAEGWPESAYNGDYIQDIANDFLAKKTVSASDGLPVTASGDIDDIESIRAFAVAYLRREQDLDLQAFGVKFDNYYLESSLYNDGKVAATVDALIKADKTYELDGALWLRTTDYRDDKDRVMKKSDGTYTYFVPDVAYHTVKWQRGFTQAINVQGSDHHGTIARVRAGLQALDIGIPQGYPDYVLHKMVTVMRNGEEVKISKRAGSYVTLRDLIEWSNGETVEGQERDLTRGRDAVRFFLISRKADTEFVFDVDVALSQSDENPVYYVQYAHARICSVLAQWTDGDEAALLDVDLSPLTAPREAALLAKLAEYPEALQRALEELGPHQVAFYLRDLAAELHSYYNAERVLVDDVALKMARLTLMHATRQVLRNGLALIGVSAPARM.

Residues 132–142 carry the 'HIGH' region motif; it reads ANPTGPLHVGH.

This sequence belongs to the class-I aminoacyl-tRNA synthetase family. As to quaternary structure, monomer.

The protein resides in the cytoplasm. It catalyses the reaction tRNA(Arg) + L-arginine + ATP = L-arginyl-tRNA(Arg) + AMP + diphosphate. The polypeptide is Arginine--tRNA ligase (Herminiimonas arsenicoxydans).